The chain runs to 740 residues: Catalase-peroxidase (740 aa).

Positions tryptophan 107–tyrosine 229 form a cross-link, tryptophyl-tyrosyl-methioninium (Trp-Tyr) (with M-255). Histidine 108 acts as the Proton acceptor in catalysis. Residues tyrosine 229–methionine 255 constitute a cross-link (tryptophyl-tyrosyl-methioninium (Tyr-Met) (with W-107)). A heme b-binding site is contributed by histidine 270.

It belongs to the peroxidase family. Peroxidase/catalase subfamily. Homodimer. It depends on heme b as a cofactor. Post-translationally, formation of the three residue Trp-Tyr-Met cross-link is important for the catalase, but not the peroxidase activity of the enzyme.

The enzyme catalyses H2O2 + AH2 = A + 2 H2O. It carries out the reaction 2 H2O2 = O2 + 2 H2O. In terms of biological role, bifunctional enzyme with both catalase and broad-spectrum peroxidase activity. May play a role in the intracellular survival of mycobacteria. This is Catalase-peroxidase from Mycobacterium bovis (strain ATCC BAA-935 / AF2122/97).